The following is a 245-amino-acid chain: AP-1-like transcription factor YAP5 (245 aa).

The segment covering 34-47 (LPHRAAQRRKRVHR) has biased composition (basic residues). The disordered stretch occupies residues 34–77 (LPHRAAQRRKRVHRLHEDYETEENDEELQKKKRQNRDAQRAYRE). The 64-residue stretch at 58–121 (DEELQKKKRQ…QAKESENHAL (64 aa)) folds into the bZIP domain. A basic motif region spans residues 63 to 82 (KKKRQNRDAQRAYRERKNNK). Basic and acidic residues predominate over residues 68-77 (NRDAQRAYRE). The segment at 86–114 (LEETIESLSKVVKNYETKLNRLQNELQAK) is leucine-zipper.

Belongs to the bZIP family. YAP subfamily. As to quaternary structure, homodimer.

It is found in the cytoplasm. It localises to the nucleus. Its function is as follows. Transcription activator involved in the regulation of genes expressed in response to environmental changes and metabolic requirements. According to genome-wide promoter binding and gene expression studies it is a coregulator for the expression of ribosomal genes, while its own expression is induced by the cell cycle specific activator SBF (SWI4-SWI6). The chain is AP-1-like transcription factor YAP5 (YAP5) from Saccharomyces cerevisiae (strain ATCC 204508 / S288c) (Baker's yeast).